We begin with the raw amino-acid sequence, 215 residues long: 3-isopropylmalate dehydratase small subunit (215 aa).

Belongs to the LeuD family. LeuD type 1 subfamily. As to quaternary structure, heterodimer of LeuC and LeuD.

It catalyses the reaction (2R,3S)-3-isopropylmalate = (2S)-2-isopropylmalate. It participates in amino-acid biosynthesis; L-leucine biosynthesis; L-leucine from 3-methyl-2-oxobutanoate: step 2/4. In terms of biological role, catalyzes the isomerization between 2-isopropylmalate and 3-isopropylmalate, via the formation of 2-isopropylmaleate. This Chromohalobacter salexigens (strain ATCC BAA-138 / DSM 3043 / CIP 106854 / NCIMB 13768 / 1H11) protein is 3-isopropylmalate dehydratase small subunit.